The following is a 64-amino-acid chain: Prokaryotic ubiquitin-like protein Pup (64 aa).

The interval M1–T36 is disordered. The segment at T21–Y58 is ARC ATPase binding. Residues Q26–E52 adopt a coiled-coil conformation. Q64 is modified (deamidated glutamine). Q64 is covalently cross-linked (Isoglutamyl lysine isopeptide (Gln-Lys) (interchain with K-? in acceptor proteins)).

It belongs to the prokaryotic ubiquitin-like protein family. As to quaternary structure, strongly interacts with the proteasome-associated ATPase ARC through a hydrophobic interface; the interacting region of Pup lies in its C-terminal half. There is one Pup binding site per ARC hexamer ring. In terms of processing, is modified by deamidation of its C-terminal glutamine to glutamate by the deamidase Dop, a prerequisite to the subsequent pupylation process.

It functions in the pathway protein degradation; proteasomal Pup-dependent pathway. Protein modifier that is covalently attached to lysine residues of substrate proteins, thereby targeting them for proteasomal degradation. The tagging system is termed pupylation. This chain is Prokaryotic ubiquitin-like protein Pup, found in Mycobacterium ulcerans (strain Agy99).